The sequence spans 356 residues: Peptide chain release factor 1 (356 aa).

Gln233 carries the N5-methylglutamine modification.

The protein belongs to the prokaryotic/mitochondrial release factor family. Methylated by PrmC. Methylation increases the termination efficiency of RF1.

Its subcellular location is the cytoplasm. Peptide chain release factor 1 directs the termination of translation in response to the peptide chain termination codons UAG and UAA. The sequence is that of Peptide chain release factor 1 from Shouchella clausii (strain KSM-K16) (Alkalihalobacillus clausii).